A 142-amino-acid polypeptide reads, in one-letter code: Alpha-lactalbumin (142 aa).

Residues 1 to 19 (MMSFVSLLLVGILFHATQA) form the signal peptide. The region spanning 20 to 142 (EQLTKCEVFQ…KLDQWLCEKL (123 aa)) is the C-type lysozyme domain. 4 disulfides stabilise this stretch: C25–C139, C47–C130, C80–C96, and C92–C110. N-linked (GlcNAc...) asparagine glycosylation is found at N64 and N93. Positions 98, 101, 103, 106, and 107 each coordinate Ca(2+).

Belongs to the glycosyl hydrolase 22 family. In terms of assembly, lactose synthase (LS) is a heterodimer of a catalytic component, beta1,4-galactosyltransferase (beta4Gal-T1) and a regulatory component, alpha-lactalbumin (LA). In terms of tissue distribution, mammary gland specific. Secreted in milk.

The protein localises to the secreted. Its function is as follows. Regulatory subunit of lactose synthase, changes the substrate specificity of galactosyltransferase in the mammary gland making glucose a good acceptor substrate for this enzyme. This enables LS to synthesize lactose, the major carbohydrate component of milk. In other tissues, galactosyltransferase transfers galactose onto the N-acetylglucosamine of the oligosaccharide chains in glycoproteins. In Capra hircus (Goat), this protein is Alpha-lactalbumin (LALBA).